Here is a 307-residue protein sequence, read N- to C-terminus: HPr kinase/phosphorylase (307 aa).

Residues H136 and K157 contribute to the active site. Position 151-158 (151-158) interacts with ATP; it reads GESGIGKS. A Mg(2+)-binding site is contributed by S158. Residue D175 is the Proton acceptor; for phosphorylation activity. Proton donor; for dephosphorylation activity of the active site. The important for the catalytic mechanism of both phosphorylation and dephosphorylation stretch occupies residues 198–207; the sequence is LEVRGMGIID. E199 contributes to the Mg(2+) binding site. R240 is a catalytic residue. Residues 261-266 are important for the catalytic mechanism of dephosphorylation; the sequence is PIRPGR.

The protein belongs to the HPrK/P family. In terms of assembly, homohexamer. The cofactor is Mg(2+).

It catalyses the reaction [HPr protein]-L-serine + ATP = [HPr protein]-O-phospho-L-serine + ADP + H(+). The enzyme catalyses [HPr protein]-O-phospho-L-serine + phosphate + H(+) = [HPr protein]-L-serine + diphosphate. Functionally, catalyzes the ATP- as well as the pyrophosphate-dependent phosphorylation of a specific serine residue in HPr, a phosphocarrier protein of the phosphoenolpyruvate-dependent sugar phosphotransferase system (PTS). HprK/P also catalyzes the pyrophosphate-producing, inorganic phosphate-dependent dephosphorylation (phosphorolysis) of seryl-phosphorylated HPr (P-Ser-HPr). The two antagonistic activities of HprK/P are regulated by several intracellular metabolites, which change their concentration in response to the absence or presence of rapidly metabolisable carbon sources (glucose, fructose, etc.) in the growth medium. Therefore, by controlling the phosphorylation state of HPr, HPrK/P is a sensor enzyme that plays a major role in the regulation of carbon metabolism and sugar transport: it mediates carbon catabolite repression (CCR), and regulates PTS-catalyzed carbohydrate uptake and inducer exclusion. This Clostridium perfringens (strain 13 / Type A) protein is HPr kinase/phosphorylase.